The sequence spans 135 residues: ATP synthase epsilon chain (135 aa).

Belongs to the ATPase epsilon chain family. F-type ATPases have 2 components, CF(1) - the catalytic core - and CF(0) - the membrane proton channel. CF(1) has five subunits: alpha(3), beta(3), gamma(1), delta(1), epsilon(1). CF(0) has three main subunits: a, b and c.

Its subcellular location is the cell inner membrane. Produces ATP from ADP in the presence of a proton gradient across the membrane. The protein is ATP synthase epsilon chain of Brucella anthropi (strain ATCC 49188 / DSM 6882 / CCUG 24695 / JCM 21032 / LMG 3331 / NBRC 15819 / NCTC 12168 / Alc 37) (Ochrobactrum anthropi).